A 155-amino-acid chain; its full sequence is Small ribosomal subunit protein uS9 (155 aa).

This sequence belongs to the universal ribosomal protein uS9 family.

This chain is Small ribosomal subunit protein uS9, found in Rhizobium etli (strain CIAT 652).